The following is a 437-amino-acid chain: Adenylosuccinate synthetase (437 aa).

GTP contacts are provided by residues 12 to 18 and 40 to 42; these read GDEGKGK and GHT. Aspartate 13 functions as the Proton acceptor in the catalytic mechanism. Positions 13 and 40 each coordinate Mg(2+). Residues 13–16, 38–41, threonine 128, arginine 142, glutamine 223, threonine 238, and arginine 302 each bind IMP; these read DEGK and NAGH. Histidine 41 acts as the Proton donor in catalysis. The disordered stretch occupies residues 119-138; it reads QRGERRIGTTGRGIGPTYAD. 298–304 is a binding site for substrate; sequence TTTGRRR. Residues arginine 304, 330–332, and 412–414 contribute to the GTP site; these read KLD and SLG.

Belongs to the adenylosuccinate synthetase family. Homodimer. The cofactor is Mg(2+).

It localises to the cytoplasm. It catalyses the reaction IMP + L-aspartate + GTP = N(6)-(1,2-dicarboxyethyl)-AMP + GDP + phosphate + 2 H(+). It functions in the pathway purine metabolism; AMP biosynthesis via de novo pathway; AMP from IMP: step 1/2. Plays an important role in the de novo pathway of purine nucleotide biosynthesis. Catalyzes the first committed step in the biosynthesis of AMP from IMP. The polypeptide is Adenylosuccinate synthetase (Synechococcus sp. (strain WH7803)).